We begin with the raw amino-acid sequence, 366 residues long: Isocitrate dehydrogenase [NAD] subunit alpha, mitochondrial (366 aa).

The transit peptide at 1 to 27 (MAGPAWISKVSRLLGAFHNQKQVTRGF) directs the protein to the mitochondrion. Lysine 77 is modified (N6-succinyllysine). Residue threonine 101 is modified to Phosphothreonine. 3 residues coordinate substrate: arginine 115, arginine 125, and arginine 146. An N6-acetyllysine modification is found at lysine 223. Mg(2+)-binding residues include aspartate 233, aspartate 257, and aspartate 261. Lysine 343 bears the N6-acetyllysine; alternate mark. Residue lysine 343 is modified to N6-succinyllysine; alternate. Lysine 350 is modified (N6-succinyllysine).

Belongs to the isocitrate and isopropylmalate dehydrogenases family. In terms of assembly, heterooligomer of subunits alpha (IDH3A), beta (IDH3B), and gamma (IDH3G) in the apparent ratio of 2:1:1. The heterodimer containing one IDH3A and one IDH3B subunit and the heterodimer containing one IDH3A and one IDH3G subunit assemble into a heterotetramer (which contains two subunits of IDH3A, one of IDH3B and one of IDH3G) and further into the heterooctamer. It depends on Mg(2+) as a cofactor. Mn(2+) serves as cofactor.

It localises to the mitochondrion. It catalyses the reaction D-threo-isocitrate + NAD(+) = 2-oxoglutarate + CO2 + NADH. The heterotetramer and the heterodimer composed of IDH3A and IDH3G subunits can be allosterically activated by citrate (CIT) or/and ADP, and the two activators can act independently or synergistically. The heterodimer composed of IDH3A and IDH3B subunits cannot be allosterically regulated and the allosteric regulation of the heterotetramer is through the IDH3G subunit and not the IDH3B subunit. The IDH3G subunit contains the allosteric site which consists of a CIT-binding site and an ADP-binding site, and the binding of CIT and ADP causes conformational changes at the allosteric site which are transmitted to the active site in the catalytic subunit (IDH3A) through a cascade of conformational changes at the heterodimer interface, leading to stabilization of the isocitrate-binding at the active site and thus activation of the enzyme. ATP can activate the heterotetramer and the heterodimer composed of IDH3A and IDH3G subunits at low concentrations but inhibits their activities at high concentrations, whereas ATP exhibits only inhibitory effect on the heterodimer composed of IDH3A and IDH3B subunits. Catalytic subunit of the enzyme which catalyzes the decarboxylation of isocitrate (ICT) into alpha-ketoglutarate. The heterodimer composed of the alpha (IDH3A) and beta (IDH3B) subunits and the heterodimer composed of the alpha (IDH3A) and gamma (IDH3G) subunits, have considerable basal activity but the full activity of the heterotetramer (containing two subunits of IDH3A, one of IDH3B and one of IDH3G) requires the assembly and cooperative function of both heterodimers. The sequence is that of Isocitrate dehydrogenase [NAD] subunit alpha, mitochondrial (IDH3A) from Sus scrofa (Pig).